The sequence spans 631 residues: ATP-dependent RNA helicase mrh4, mitochondrial (631 aa).

Residues 1–39 (MYPLGRVSLPVRSPVCLFCQNRTSSLLPSAYVWQSARTM) constitute a mitochondrion transit peptide. The segment at 55–111 (PNVAKTSLKKKRNDTDRFGPFAGMNQTEARIRDDPRSRSPASLKRSKAPSDESGRKD) is disordered. Residues 102–111 (APSDESGRKD) show a composition bias toward basic and acidic residues. The Q motif signature appears at 143-176 (TSFDQFPLLPVVRHSIFSQALPGLHDVTPTPIQR). The disordered stretch occupies residues 181 to 200 (RLLDDTNKDKKPKKRAEGEP). The 213-residue stretch at 196–408 (AEGEPEYDQY…RKKYPDIQRL (213 aa)) folds into the Helicase ATP-binding domain. Residue 209 to 216 (AETGSGKT) coordinates ATP. The DEAD box motif lies at 355 to 358 (DEAD). The 190-residue stretch at 442 to 631 (DVIWSIGKAG…EGMFRGQALI (190 aa)) folds into the Helicase C-terminal domain.

This sequence belongs to the DEAD box helicase family. MRH4 subfamily.

The protein localises to the mitochondrion. The catalysed reaction is ATP + H2O = ADP + phosphate + H(+). Its function is as follows. ATP-binding RNA helicase involved in mitochondrial RNA metabolism. Required for maintenance of mitochondrial DNA. This is ATP-dependent RNA helicase mrh4, mitochondrial (mrh4) from Aspergillus terreus (strain NIH 2624 / FGSC A1156).